The primary structure comprises 189 residues: MRGAGGALAVAVAALLVCCSADPHQEGDVSGSDHNTAERYDAAGQKTRTLDTLGGNLVREVREIRHSGYVPYLISRRFDFASPYGGKREPWPLAPIEFSGYYGDGLPKRNFDEIDRSGLDTFVKKRNFDEIDRSSMPFPYATKRFYHLSSFDKKRYRADYPMDEIDLSHFPIGSKRSQDSYPLLPRNLL.

The N-terminal stretch at M1 to A21 is a signal peptide. Propeptides lie at residues D22–K124 and F145–S174.

The protein belongs to the orcokinin family. As to expression, orcokinin-like peptide: Expressed in corpora cardiaca (CC), corpora allata (CA), antennal lobe (AL) and gnathal ganglion (GNG) (at protein level). Expression in CC, CA and GNG detected in some animals, in AL in few animals (at protein level). Orcokinin-like peptide precursor-related peptide: Expressed in corpora cardiaca (CC), corpora allata (CA), antennal lobe (AL) and gnathal ganglion (GNG) (at protein level). Expression in GNG detected in most animals, expression in CC, CA and AL detected in some animals (at protein level).

It localises to the secreted. Functionally, myotropic peptides. In Agrotis ipsilon (Black cutworm moth), this protein is Orcokinin peptides.